Consider the following 386-residue polypeptide: MTNNPLIPQSKLPQLGTTIFTQMSALAQQHQAINLSQGFPDFDGPRYLQERLAHHVAQGANQYAPMTGVQALREAIAQKTERLYGYQPDADSDITVTAGATEALYAAITALVRNGDEVICFDPSYDSYAPAIALSGGIVKRMALQPPHFRVDWQEFAALLSERTRLVILNTPHNPSATVWQQADFAALWQAIAGHEIFVISDEVYEHINFSQQGHASVLAHPQLRERAVAVSSFGKTYHMTGWKVGYCVAPAPISAEIRKVHQYLTFSVNTPAQLALADMLRAEPEHYLALPDFYRQKRDILVNALNESRLEILPCEGTYFLLVDYSAVSTLDDVEFCQWLTQEHGVAAIPLSVFCADPFPHKLIRLCFAKKESTLLAAAERLRQL.

Lysine 236 is subject to N6-(pyridoxal phosphate)lysine.

It belongs to the class-I pyridoxal-phosphate-dependent aminotransferase family. Homodimer. The cofactor is pyridoxal 5'-phosphate.

The protein localises to the cytoplasm. The enzyme catalyses a 2-oxocarboxylate + L-methionine = 4-methylsulfanyl-2-oxobutanoate + an L-alpha-amino acid. Functionally, shows aminotransferase activity with methionine and histidine as substrates, and to a lesser extent also with phenylalanine. The polypeptide is Methionine aminotransferase (ybdL) (Escherichia coli (strain K12)).